A 254-amino-acid polypeptide reads, in one-letter code: Myeloblastin (254 aa).

A signal peptide spans 1 to 27 (MSGSYPSPKGIHPFLLLALVVGGAVQA). Positions 28–29 (SK) are excised as a propeptide. The Peptidase S1 domain occupies 30–250 (IVGGHEARPH…YVDWIQNVLR (221 aa)). C58 and C74 are oxidised to a cystine. Catalysis depends on charge relay system residues H73 and D120. N127 and N176 each carry an N-linked (GlcNAc...) asparagine glycan. 3 disulfide bridges follow: C154–C211, C184–C190, and C201–C226. S205 functions as the Charge relay system in the catalytic mechanism. Positions 251–254 (GAEP) are excised as a propeptide.

The protein belongs to the peptidase S1 family. Elastase subfamily. May form dimers. Interacts with CD177; the interaction tethers PRTN3 to the cell surface; the interaction is direct. Interacts with SERPINB1. Interacts with ADGRG3.

It localises to the lysosome. The protein localises to the secreted. The protein resides in the cell membrane. Its subcellular location is the membrane raft. The enzyme catalyses Hydrolysis of proteins, including elastin, by preferential cleavage: -Ala-|-Xaa- &gt; -Val-|-Xaa-.. Functionally, serine protease that degrades elastin, fibronectin, laminin, vitronectin, and collagen types I, III, and IV (in vitro). By cleaving and activating receptor F2RL1/PAR-2, enhances endothelial cell barrier function and thus vascular integrity during neutrophil transendothelial migration. May play a role in neutrophil transendothelial migration, probably when associated with CD177. Triggers inflammatory processes in neutrophils by interacting with ADGRG3 upstream of F2RL1/PAR2 activation. The chain is Myeloblastin (Prtn3) from Mus musculus (Mouse).